We begin with the raw amino-acid sequence, 167 residues long: DNA-directed RNA polymerase II subunit rpb-9 (167 aa).

Residues 28 to 49 (DDMYDQNGASPAPSQNEKPGKS) form a disordered region. Over residues 34-44 (NGASPAPSQNE) the composition is skewed to polar residues. Residues Cys-59, Cys-62, Cys-81, Cys-84, Cys-128, Cys-131, Cys-156, and Cys-161 each coordinate Zn(2+). The segment at 59 to 84 (CPECNNMLYPREDKESRVLMYSCRNC) adopts a C4-type zinc-finger fold. The TFIIS-type zinc finger occupies 124 to 166 (EEHQCPVCGKSKAVFFQAQTKKAEEEMRLYYVCASQDCQHRWT).

It belongs to the archaeal RpoM/eukaryotic RPA12/RPB9/RPC11 RNA polymerase family. In terms of assembly, component of the RNA polymerase II (Pol II) complex consisting of 12 subunits. As to expression, expressed in the soma and in the germline.

It localises to the nucleus. Its subcellular location is the nucleolus. DNA-dependent RNA polymerase catalyzes the transcription of DNA into RNA using the four ribonucleoside triphosphates as substrates. Component of RNA polymerase II which synthesizes mRNA precursors and many functional non-coding RNAs. Pol II is the central component of the basal RNA polymerase II transcription machinery. It is composed of mobile elements that move relative to each other. RPB9 is part of the upper jaw surrounding the central large cleft and thought to grab the incoming DNA template. Recruits ints-6, a component of the Integrator complex to PIWI-interacting RNA (piRNA) genes, to mediate Integrator complex-dependent cleavage of 3' ends of nascent transcripts upon RNA Pol II backtracking to terminate transcription and generate piRNA precursors. Promotes the biogenesis of secondary 22G-siRNAs (a class of 22 nucleotide siRNAs that possess a triphosphorylated guanine residue at the 5'-end). Involved in gene silencing mediated by a class of 21 nucleotide piRNAs that possess a uracil residue at the 5'-end (also called 21U-RNAs) and guide the Piwi protein prg-1 to its DNA targets for silencing. Plays a role in small RNA-directed transgenerational epigenetic inheritance (also called RNAe) over several generations. Not required for the transgenerational inheritance of exogenous small interfering RNAs (RNAi). May play a role in the silencing of the DNA transposable elements from the DNA transposon families, Chapaev-2 and CEMUDR1. This is DNA-directed RNA polymerase II subunit rpb-9 from Caenorhabditis elegans.